Here is a 281-residue protein sequence, read N- to C-terminus: Pantothenate synthetase (281 aa).

30-37 (MGYLHDGH) is an ATP binding site. The Proton donor role is filled by histidine 37. Residue glutamine 61 coordinates (R)-pantoate. Glutamine 61 is a beta-alanine binding site. ATP is bound at residue 147 to 150 (GEKD). Glutamine 153 provides a ligand contact to (R)-pantoate. ATP is bound by residues isoleucine 176 and 184–187 (KSSR).

It belongs to the pantothenate synthetase family. In terms of assembly, homodimer.

The protein localises to the cytoplasm. The enzyme catalyses (R)-pantoate + beta-alanine + ATP = (R)-pantothenate + AMP + diphosphate + H(+). It functions in the pathway cofactor biosynthesis; (R)-pantothenate biosynthesis; (R)-pantothenate from (R)-pantoate and beta-alanine: step 1/1. Catalyzes the condensation of pantoate with beta-alanine in an ATP-dependent reaction via a pantoyl-adenylate intermediate. The protein is Pantothenate synthetase of Clostridium acetobutylicum (strain ATCC 824 / DSM 792 / JCM 1419 / IAM 19013 / LMG 5710 / NBRC 13948 / NRRL B-527 / VKM B-1787 / 2291 / W).